Consider the following 552-residue polypeptide: Putative phosphate permease MT2339 (552 aa).

13 consecutive transmembrane segments (helical) span residues tryptophan 38 to phenylalanine 58, isoleucine 69 to valine 89, alanine 107 to threonine 127, aspartate 146 to asparagine 166, isoleucine 178 to alanine 198, valine 213 to isoleucine 233, valine 326 to phenylalanine 346, phenylalanine 360 to leucine 380, threonine 389 to glycine 409, alanine 437 to isoleucine 457, methionine 472 to threonine 492, valine 493 to isoleucine 513, and isoleucine 526 to valine 546.

Belongs to the inorganic phosphate transporter (PiT) (TC 2.A.20) family.

It localises to the cell membrane. Functionally, potential transporter for phosphate. The chain is Putative phosphate permease MT2339 from Mycobacterium tuberculosis (strain CDC 1551 / Oshkosh).